The following is a 734-amino-acid chain: Photosystem I P700 chlorophyll a apoprotein A2 (734 aa).

8 consecutive transmembrane segments (helical) span residues Ile46–Ala69, Leu135–Gln158, Leu175–Ile199, Met273–Tyr291, Leu330–Tyr353, Ala369–Ile395, Ala417–His439, and Phe517–Val535. 2 residues coordinate [4Fe-4S] cluster: Cys559 and Cys568. 2 consecutive transmembrane segments (helical) span residues Ala575–Trp596 and Leu643–Ile665. Chlorophyll a contacts are provided by His654, Met662, and Tyr670. Residue Trp671 coordinates phylloquinone. Residues Leu707–Ala727 traverse the membrane as a helical segment.

It belongs to the PsaA/PsaB family. As to quaternary structure, the PsaA/B heterodimer binds the P700 chlorophyll special pair and subsequent electron acceptors. PSI consists of a core antenna complex that captures photons, and an electron transfer chain that converts photonic excitation into a charge separation. The eukaryotic PSI reaction center is composed of at least 11 subunits. P700 is a chlorophyll a/chlorophyll a' dimer, A0 is one or more chlorophyll a, A1 is one or both phylloquinones and FX is a shared 4Fe-4S iron-sulfur center. is required as a cofactor.

It is found in the plastid. The protein localises to the chloroplast thylakoid membrane. It carries out the reaction reduced [plastocyanin] + hnu + oxidized [2Fe-2S]-[ferredoxin] = oxidized [plastocyanin] + reduced [2Fe-2S]-[ferredoxin]. Its function is as follows. PsaA and PsaB bind P700, the primary electron donor of photosystem I (PSI), as well as the electron acceptors A0, A1 and FX. PSI is a plastocyanin-ferredoxin oxidoreductase, converting photonic excitation into a charge separation, which transfers an electron from the donor P700 chlorophyll pair to the spectroscopically characterized acceptors A0, A1, FX, FA and FB in turn. Oxidized P700 is reduced on the lumenal side of the thylakoid membrane by plastocyanin. The protein is Photosystem I P700 chlorophyll a apoprotein A2 of Spinacia oleracea (Spinach).